The chain runs to 148 residues: Nucleoside diphosphate kinase 1 (148 aa).

6 residues coordinate ATP: Lys9, Phe57, Arg85, Thr91, Arg102, and Asn112. Catalysis depends on His115, which acts as the Pros-phosphohistidine intermediate.

It belongs to the NDK family. Requires Mg(2+) as cofactor. The N-terminus is blocked.

It carries out the reaction a 2'-deoxyribonucleoside 5'-diphosphate + ATP = a 2'-deoxyribonucleoside 5'-triphosphate + ADP. The catalysed reaction is a ribonucleoside 5'-diphosphate + ATP = a ribonucleoside 5'-triphosphate + ADP. Its function is as follows. Major role in the synthesis of nucleoside triphosphates other than ATP. The ATP gamma phosphate is transferred to the NDP beta phosphate via a ping-pong mechanism, using a phosphorylated active-site intermediate. The protein is Nucleoside diphosphate kinase 1 (NDPK1) of Spinacia oleracea (Spinach).